A 241-amino-acid polypeptide reads, in one-letter code: uncharacterized protein (241 aa).

6 helical membrane-spanning segments follow: residues 1 to 21 (MMMA…GILL), 43 to 63 (FPII…LKNL), 75 to 95 (LPIY…FYAI), 108 to 128 (IYVL…VLML), 160 to 180 (VLTS…HGLL), and 200 to 220 (ILVI…IASG).

It to M.jannaschii MJ0871, MJ0880 and MJ1556.

It localises to the cell membrane. This is an uncharacterized protein from Methanocaldococcus jannaschii (strain ATCC 43067 / DSM 2661 / JAL-1 / JCM 10045 / NBRC 100440) (Methanococcus jannaschii).